The primary structure comprises 301 residues: Putative S-adenosyl-L-methionine-dependent methyltransferase MMAR_4850 (301 aa).

S-adenosyl-L-methionine is bound by residues D127 and 156-157; that span reads DL.

This sequence belongs to the UPF0677 family.

Exhibits S-adenosyl-L-methionine-dependent methyltransferase activity. The chain is Putative S-adenosyl-L-methionine-dependent methyltransferase MMAR_4850 from Mycobacterium marinum (strain ATCC BAA-535 / M).